A 158-amino-acid polypeptide reads, in one-letter code: UPF0098 protein YbhB (158 aa).

This sequence belongs to the UPF0098 family. Homodimer.

The protein resides in the cytoplasm. This is UPF0098 protein YbhB (ybhB) from Escherichia coli (strain K12).